We begin with the raw amino-acid sequence, 624 residues long: Chaperone protein HtpG (624 aa).

An a; substrate-binding region spans residues Met-1–Arg-336. Residues Glu-337–Lys-552 are b. The c stretch occupies residues Leu-553 to Ser-624.

It belongs to the heat shock protein 90 family. Homodimer.

The protein localises to the cytoplasm. Functionally, molecular chaperone. Has ATPase activity. This is Chaperone protein HtpG from Salmonella choleraesuis (strain SC-B67).